The chain runs to 549 residues: Myotubularin-related protein 9 (549 aa).

Met-1 carries the N-acetylmethionine modification. The GRAM domain maps to 4 to 99; the sequence is AELIKTPRVD…LNIASSIEAL (96 aa). The Myotubularin phosphatase domain occupies 123 to 498; it reads GWHSFLPEQE…QSLQLWEGIF (376 aa). Residues 508 to 542 adopt a coiled-coil conformation; sequence LDEAYEEMVNIIEYNKELQAKVNLLRRQLAELETE. The residue at position 548 (Ser-548) is a Phosphoserine.

Belongs to the protein-tyrosine phosphatase family. Non-receptor class myotubularin subfamily. In terms of assembly, homodimer. Heterodimer (via C-terminus) with lipid phosphatase MTMR6 (via C-terminus). Heterodimer (via coiled coil domain) with lipid phosphatase MTMR7 (via C-terminus). Heterodimer with lipid phosphatase MTMR8.

Its subcellular location is the cytoplasm. It is found in the cell projection. It localises to the ruffle membrane. The protein resides in the perinuclear region. The protein localises to the endoplasmic reticulum. In terms of biological role, acts as an adapter for myotubularin-related phosphatases. Increases lipid phosphatase MTMR6 catalytic activity, specifically towards phosphatidylinositol 3,5-bisphosphate, and MTMR6 binding affinity for phosphorylated phosphatidylinositols. Positively regulates lipid phosphatase MTMR7 catalytic activity. Increases MTMR8 catalytic activity towards phosphatidylinositol 3-phosphate. The formation of the MTMR6-MTMR9 complex, stabilizes both MTMR6 and MTMR9 protein levels. Stabilizes MTMR8 protein levels. Plays a role in the late stages of macropinocytosis possibly by regulating MTMR6-mediated dephosphorylation of phosphatidylinositol 3-phosphate in membrane ruffles. Negatively regulates autophagy, in part via its association with MTMR8. Negatively regulates DNA damage-induced apoptosis, in part via its association with MTMR6. Does not bind mono-, di- and tri-phosphorylated phosphatidylinositols, phosphatidic acid and phosphatidylserine. The protein is Myotubularin-related protein 9 (MTMR9) of Bos taurus (Bovine).